The following is a 98-amino-acid chain: NADH-ubiquinone oxidoreductase chain 4L (98 aa).

3 consecutive transmembrane segments (helical) span residues 2 to 22 (PSIS…MLMF), 29 to 49 (SLLC…LIIL), and 61 to 81 (ILLL…LVMI).

The protein belongs to the complex I subunit 4L family. As to quaternary structure, core subunit of respiratory chain NADH dehydrogenase (Complex I) which is composed of 45 different subunits.

Its subcellular location is the mitochondrion inner membrane. It carries out the reaction a ubiquinone + NADH + 5 H(+)(in) = a ubiquinol + NAD(+) + 4 H(+)(out). In terms of biological role, core subunit of the mitochondrial membrane respiratory chain NADH dehydrogenase (Complex I) which catalyzes electron transfer from NADH through the respiratory chain, using ubiquinone as an electron acceptor. Part of the enzyme membrane arm which is embedded in the lipid bilayer and involved in proton translocation. This chain is NADH-ubiquinone oxidoreductase chain 4L (MT-ND4L), found in Mirza coquereli (Coquerel's giant mouse lemur).